The sequence spans 380 residues: Cytochrome b (380 aa).

The next 4 membrane-spanning stretches (helical) occupy residues 34-54 (FGSLLAVCLMTQILTGLLLAM), 78-99 (WLIRNLHANGASFFFICIFLHI), 114-134 (WNTGVILLLTLMATAFVGYVL), and 179-199 (FFALHFLLPFAIAGITVVHLT). Heme b-binding residues include histidine 84 and histidine 98. Heme b is bound by residues histidine 183 and histidine 197. Residue histidine 202 participates in a ubiquinone binding. 4 consecutive transmembrane segments (helical) span residues 227–247 (LKDILGLTLMLTPFLTLALFS), 289–309 (LGGVLALAASVLILFLIPFLH), 321–341 (LSQTLFWLLVANLLILTWIGS), and 348–368 (FMIIGQMASLSYFTILLILFP).

Belongs to the cytochrome b family. The cytochrome bc1 complex contains 11 subunits: 3 respiratory subunits (MT-CYB, CYC1 and UQCRFS1), 2 core proteins (UQCRC1 and UQCRC2) and 6 low-molecular weight proteins (UQCRH/QCR6, UQCRB/QCR7, UQCRQ/QCR8, UQCR10/QCR9, UQCR11/QCR10 and a cleavage product of UQCRFS1). This cytochrome bc1 complex then forms a dimer. Heme b serves as cofactor.

The protein resides in the mitochondrion inner membrane. Its function is as follows. Component of the ubiquinol-cytochrome c reductase complex (complex III or cytochrome b-c1 complex) that is part of the mitochondrial respiratory chain. The b-c1 complex mediates electron transfer from ubiquinol to cytochrome c. Contributes to the generation of a proton gradient across the mitochondrial membrane that is then used for ATP synthesis. The protein is Cytochrome b (MT-CYB) of Gallus lafayettii (Sri Lanka junglefowl).